Reading from the N-terminus, the 455-residue chain is Bifunctional protein GlmU (455 aa).

The pyrophosphorylase stretch occupies residues 1-227; the sequence is MLTDIVILAA…ATEALGVNDP (227 aa). UDP-N-acetyl-alpha-D-glucosamine-binding positions include 8 to 11, K22, Q73, 78 to 79, 100 to 102, G137, E152, N167, and N225; these read LAAG, GT, and YGD. Residue D102 coordinates Mg(2+). N225 provides a ligand contact to Mg(2+). The tract at residues 228 to 248 is linker; it reads VQLAILERVFQRQQLRALQMQ. Residues 249 to 455 are N-acetyltransferase; the sequence is GLRVADPARV…HWQRPRRDKK (207 aa). Positions 331 and 349 each coordinate UDP-N-acetyl-alpha-D-glucosamine. H361 functions as the Proton acceptor in the catalytic mechanism. Residues Y364 and N375 each contribute to the UDP-N-acetyl-alpha-D-glucosamine site. Residues A378, 384-385, S403, A421, and R438 contribute to the acetyl-CoA site; that span reads NY. Residues 420 to 455 form a disordered region; that stretch reads GAGSTITKEVPPGGLTLSRSPQRTIPHWQRPRRDKK.

This sequence in the N-terminal section; belongs to the N-acetylglucosamine-1-phosphate uridyltransferase family. It in the C-terminal section; belongs to the transferase hexapeptide repeat family. Homotrimer. The cofactor is Mg(2+).

The protein resides in the cytoplasm. It carries out the reaction alpha-D-glucosamine 1-phosphate + acetyl-CoA = N-acetyl-alpha-D-glucosamine 1-phosphate + CoA + H(+). The enzyme catalyses N-acetyl-alpha-D-glucosamine 1-phosphate + UTP + H(+) = UDP-N-acetyl-alpha-D-glucosamine + diphosphate. Its pathway is nucleotide-sugar biosynthesis; UDP-N-acetyl-alpha-D-glucosamine biosynthesis; N-acetyl-alpha-D-glucosamine 1-phosphate from alpha-D-glucosamine 6-phosphate (route II): step 2/2. It participates in nucleotide-sugar biosynthesis; UDP-N-acetyl-alpha-D-glucosamine biosynthesis; UDP-N-acetyl-alpha-D-glucosamine from N-acetyl-alpha-D-glucosamine 1-phosphate: step 1/1. The protein operates within bacterial outer membrane biogenesis; LPS lipid A biosynthesis. Its function is as follows. Catalyzes the last two sequential reactions in the de novo biosynthetic pathway for UDP-N-acetylglucosamine (UDP-GlcNAc). The C-terminal domain catalyzes the transfer of acetyl group from acetyl coenzyme A to glucosamine-1-phosphate (GlcN-1-P) to produce N-acetylglucosamine-1-phosphate (GlcNAc-1-P), which is converted into UDP-GlcNAc by the transfer of uridine 5-monophosphate (from uridine 5-triphosphate), a reaction catalyzed by the N-terminal domain. This Acidithiobacillus ferrooxidans (strain ATCC 23270 / DSM 14882 / CIP 104768 / NCIMB 8455) (Ferrobacillus ferrooxidans (strain ATCC 23270)) protein is Bifunctional protein GlmU.